The sequence spans 443 residues: MFLAQEIIRKKRNGLALSPAEIQFFVQGITTNAVSEGQIAAFGMAVYFNDMNMDERIALTTAMRDSGTVLNWQSLGLNGPVIDKHSTGGVGDVISLMLGPMAAACGGYVPMISGRGLGHTGGTLDKFDAIPGYQTEPSSELFRKVVKEVGVAIIGQTGDLVPADKRFYSIRDNTATVESISLITASILSKKLACNLDALAMDVKVGSGAFMPTYEASEELARSITAVANGAGTKTTALLTDMNQVLASCAGNAVEVKEAIDFLTGAYRNPRLYEVTMGLCAEMLLLGGLASNETEARAKLNRVLDNGRAAEIFGKMVSGLGGPVDFVENYSKYLPQSQIIRPVFADAKGYAYSMDTRELGLAVVTLGGGRRKPGDALDYSVGLTQVCALGDKIDSSTPIAVIHAQSEAAFTEAENAVKKAIHIGETAPEKTPEIYAYIRAADL.

The protein belongs to the thymidine/pyrimidine-nucleoside phosphorylase family. As to quaternary structure, homodimer.

The catalysed reaction is thymidine + phosphate = 2-deoxy-alpha-D-ribose 1-phosphate + thymine. It functions in the pathway pyrimidine metabolism; dTMP biosynthesis via salvage pathway; dTMP from thymine: step 1/2. Its function is as follows. The enzymes which catalyze the reversible phosphorolysis of pyrimidine nucleosides are involved in the degradation of these compounds and in their utilization as carbon and energy sources, or in the rescue of pyrimidine bases for nucleotide synthesis. The sequence is that of Thymidine phosphorylase from Shewanella putrefaciens (strain CN-32 / ATCC BAA-453).